Here is a 375-residue protein sequence, read N- to C-terminus: Erythronate-4-phosphate dehydrogenase (375 aa).

Substrate contacts are provided by Ser45 and Thr67. Asp147 is an NAD(+) binding site. Arg209 is an active-site residue. Asp233 lines the NAD(+) pocket. Glu238 is an active-site residue. The active-site Proton donor is His255. Gly258 contacts NAD(+). Position 259 (Tyr259) interacts with substrate.

It belongs to the D-isomer specific 2-hydroxyacid dehydrogenase family. PdxB subfamily. Homodimer.

It is found in the cytoplasm. The enzyme catalyses 4-phospho-D-erythronate + NAD(+) = (R)-3-hydroxy-2-oxo-4-phosphooxybutanoate + NADH + H(+). Its pathway is cofactor biosynthesis; pyridoxine 5'-phosphate biosynthesis; pyridoxine 5'-phosphate from D-erythrose 4-phosphate: step 2/5. Its function is as follows. Catalyzes the oxidation of erythronate-4-phosphate to 3-hydroxy-2-oxo-4-phosphonooxybutanoate. This chain is Erythronate-4-phosphate dehydrogenase, found in Shewanella amazonensis (strain ATCC BAA-1098 / SB2B).